We begin with the raw amino-acid sequence, 756 residues long: Cartilage oligomeric matrix protein (756 aa).

The N-terminal stretch at 1–20 is a signal peptide; that stretch reads MVLAAARVLLLTLAALGASG. The COMP N-terminal stretch occupies residues 22-85; it reads GQMPLGGDLG…PARTPKLTVR (64 aa). An EGF-like 1 domain is found at 86–125; the sequence is PLSQCSPGFCFPGVACTETANGARCGPCPEGFTGNGSHCA. Intrachain disulfides connect Cys90-Cys101, Cys95-Cys110, Cys113-Cys124, Cys130-Cys141, Cys135-Cys150, Cys183-Cys196, Cys190-Cys205, Cys228-Cys242, Cys236-Cys252, and Cys254-Cys265. Asn120 carries N-linked (GlcNAc...) asparagine glycosylation. Positions 126 to 178 constitute an EGF-like 2; calcium-binding domain; sequence DVNECTAHPCFPRVRCINTSPGFRCEACPPGFSGPTHEGVGLAFAKANKQVCT. The 40-residue stretch at 179–218 folds into the EGF-like 3; calcium-binding domain; the sequence is DINECETGQHNCVPNSVCVNTVGSFQCGPCQPGFVGDQAS. The 43-residue stretch at 224–266 folds into the EGF-like 4 domain; sequence PQRFCPDGTPSPCHEKADCVLERDGSRSCVCAVGWAGNGLICG. 8 TSP type-3 repeats span residues 267–299, 300–335, 336–358, 359–394, 395–417, 418–455, 456–491, and 492–527; these read RDTD…NSGQ, EDVD…NPDQ, RNTD…NDDQ, KDTD…NSDQ, KDTD…NADQ, RDVD…NSAQ, QDSD…NPGQ, and EDMD…EVTL. Positions 322–502 are disordered; the sequence is NEKDNCPLVR…DMDRDGVGDA (181 aa). Composition is skewed to basic and acidic residues over residues 333-345, 351-369, and 415-425; these read PDQR…KWGD, RSQK…RGDA, and ADQRDVDHDFV. The short motif at 366–368 is the Cell attachment site element; it reads RGD. Acidic residues predominate over residues 466 to 475; sequence ACDDDDDNDG. Positions 526–756 are mediates cell survival and induction of the IAP family of survival proteins; it reads TLTDFRAFQT…DYEAQRLLQA (231 aa). In terms of domain architecture, TSP C-terminal spans 531–745; it reads RAFQTVVLDP…LRYRCNDTIP (215 aa). A glycan (N-linked (GlcNAc...) asparagine) is linked at Asn741.

Belongs to the thrombospondin family. In terms of assembly, pentamer; disulfide-linked. Exists in a more compact conformation in the presence of calcium and shows a more extended conformation in the absence of calcium. Interacts with ITGB3, ITGA5 and FN1. Binding to FN1 requires the presence of divalent cations (Ca(2+), Mg(2+) or Mn(2+)). The greatest amount of binding is seen in the presence of Mn(2+). Interacts with MATN1, MATN3, MATN4 and ACAN. Binds heparin, heparan sulfate and chondroitin sulfate. EDTA dimishes significantly its binding to ACAN and abolishes its binding to MATN3, MATN4 and chondroitin sulfate. Interacts with collagen I, II and IX, and interaction with these collagens is dependent on the presence of zinc ions. Interacts with ADAMTS12. Interacts with ITGA7. It depends on Ca(2+) as a cofactor. In terms of processing, proteolytically cleaved by metalloproteases ADAMTS4 and ADAMTS1 with ADAMTS4 showing more potent activity.

The protein resides in the secreted. Its subcellular location is the extracellular space. It is found in the extracellular matrix. Plays a role in the structural integrity of cartilage via its interaction with other extracellular matrix proteins such as the collagens and fibronectin. Can mediate the interaction of chondrocytes with the cartilage extracellular matrix through interaction with cell surface integrin receptors. Could play a role in the pathogenesis of osteoarthritis. Potent suppressor of apoptosis in both primary chondrocytes and transformed cells. Suppresses apoptosis by blocking the activation of caspase-3 and by inducing the IAP family of survival proteins (BIRC3, BIRC2, BIRC5 and XIAP). Essential for maintaining a vascular smooth muscle cells (VSMCs) contractile/differentiated phenotype under physiological and pathological stimuli. Maintains this phenotype of VSMCs by interacting with ITGA7. This chain is Cartilage oligomeric matrix protein (COMP), found in Bos taurus (Bovine).